Reading from the N-terminus, the 277-residue chain is Sarcosine/dimethylglycine N-methyltransferase (277 aa).

The protein belongs to the methyltransferase superfamily. As to quaternary structure, monomer.

The catalysed reaction is sarcosine + 2 S-adenosyl-L-methionine = glycine betaine + 2 S-adenosyl-L-homocysteine + 2 H(+). The enzyme catalyses sarcosine + S-adenosyl-L-methionine = N,N-dimethylglycine + S-adenosyl-L-homocysteine + H(+). It carries out the reaction N,N-dimethylglycine + S-adenosyl-L-methionine = glycine betaine + S-adenosyl-L-homocysteine + H(+). Its pathway is amine and polyamine biosynthesis; betaine biosynthesis via glycine pathway; betaine from glycine: step 2/3. The protein operates within amine and polyamine biosynthesis; betaine biosynthesis via glycine pathway; betaine from glycine: step 3/3. With respect to regulation, inhibited by n-butylic acid and S-adenosyl-L-homocysteine. Functionally, catalyzes the methylation of sarcosine and dimethylglycine to dimethylglycine and betaine, respectively, with S-adenosylmethionine (AdoMet) acting as the methyl donor. Activity with sarcosine is much weaker than activity with dimethylglycine. The protein is Sarcosine/dimethylglycine N-methyltransferase of Aphanothece halophytica.